Reading from the N-terminus, the 197-residue chain is Small ribosomal subunit protein eS1 (197 aa).

It belongs to the eukaryotic ribosomal protein eS1 family.

This is Small ribosomal subunit protein eS1 from Methanoculleus marisnigri (strain ATCC 35101 / DSM 1498 / JR1).